Here is a 197-residue protein sequence, read N- to C-terminus: Holliday junction branch migration complex subunit RuvA (197 aa).

A domain I region spans residues 1–64; the sequence is MYEYIKGKYI…EDFIGVYGFL (64 aa). The segment at 65–143 is domain II; it reads TKDELSMFKL…IDILEEDDEQ (79 aa). The interval 144-148 is flexible linker; the sequence is TINKV. The domain III stretch occupies residues 149–197; the sequence is TDDKKVLEAVAALITLGYSEKEANKVINSCDKNNSLEQIIKEALKYLMK.

The protein belongs to the RuvA family. As to quaternary structure, homotetramer. Forms an RuvA(8)-RuvB(12)-Holliday junction (HJ) complex. HJ DNA is sandwiched between 2 RuvA tetramers; dsDNA enters through RuvA and exits via RuvB. An RuvB hexamer assembles on each DNA strand where it exits the tetramer. Each RuvB hexamer is contacted by two RuvA subunits (via domain III) on 2 adjacent RuvB subunits; this complex drives branch migration. In the full resolvosome a probable DNA-RuvA(4)-RuvB(12)-RuvC(2) complex forms which resolves the HJ.

Its subcellular location is the cytoplasm. Functionally, the RuvA-RuvB-RuvC complex processes Holliday junction (HJ) DNA during genetic recombination and DNA repair, while the RuvA-RuvB complex plays an important role in the rescue of blocked DNA replication forks via replication fork reversal (RFR). RuvA specifically binds to HJ cruciform DNA, conferring on it an open structure. The RuvB hexamer acts as an ATP-dependent pump, pulling dsDNA into and through the RuvAB complex. HJ branch migration allows RuvC to scan DNA until it finds its consensus sequence, where it cleaves and resolves the cruciform DNA. The protein is Holliday junction branch migration complex subunit RuvA of Clostridium botulinum (strain 657 / Type Ba4).